We begin with the raw amino-acid sequence, 451 residues long: Nucleoprotein (451 aa).

Residues 1–57 (MSFVPGQENAGSRSSSGNRAGNGILKKTTWADQTERGNRGRRNHPKQTATTQPNAGS) form a disordered region. A compositionally biased stretch (low complexity) spans 9–23 (NAGSRSSSGNRAGNG). The span at 46–55 (KQTATTQPNA) shows a compositional bias: polar residues. An RNA-binding region spans residues 52–193 (QPNAGSVVPH…GFYVEGSGRS (142 aa)). The CoV N NTD domain occupies 60–189 (PHYSWFSGIT…VLPQGFYVEG (130 aa)). 3 residues coordinate RNA: arginine 105, arginine 121, and arginine 163. 3 disordered regions span residues 155–227 (KTTA…AVKP), 266–288 (KPRQ…KRGP), and 379–423 (AGSV…VSRE). Serine 166 bears the Phosphoserine; by host mark. Position 173 is a phosphothreonine; by host (threonine 173). Low complexity predominate over residues 189–208 (GSGRSAPASRSGSRSQSRGP). Serine 190 is modified (phosphoserine; by host). The span at 211 to 221 (RARSSSNQRQP) shows a compositional bias: polar residues. Residues 256–379 (AKEVRQKILT…ENLNAYQDQA (124 aa)) enclose the CoV N CTD domain. Residues 263 to 380 (ILTKPRQKRT…NLNAYQDQAG (118 aa)) are dimerization. Residues serine 386 and serine 421 each carry the phosphoserine; by host modification. Threonine 425 is modified (phosphothreonine; by host).

Belongs to the betacoronavirus nucleocapsid protein family. Homooligomer. Both monomeric and oligomeric forms interact with RNA. Interacts with protein M. Interacts with NSP3; this interaction serves to tether the genome to the newly translated replicase-transcriptase complex at a very early stage of infection. In terms of processing, ADP-ribosylated. The ADP-ribosylation is retained in the virion during infection. Post-translationally, phosphorylated on serine and threonine residues.

The protein resides in the virion. It localises to the host endoplasmic reticulum-Golgi intermediate compartment. It is found in the host Golgi apparatus. Its function is as follows. Packages the positive strand viral genome RNA into a helical ribonucleocapsid (RNP) and plays a fundamental role during virion assembly through its interactions with the viral genome and membrane protein M. Plays an important role in enhancing the efficiency of subgenomic viral RNA transcription as well as viral replication. The sequence is that of Nucleoprotein from Murine coronavirus (strain 2) (MHV-2).